We begin with the raw amino-acid sequence, 274 residues long: 2-dehydro-3-deoxyphosphooctonate aldolase (274 aa).

The protein belongs to the KdsA family.

It is found in the cytoplasm. The enzyme catalyses D-arabinose 5-phosphate + phosphoenolpyruvate + H2O = 3-deoxy-alpha-D-manno-2-octulosonate-8-phosphate + phosphate. Its pathway is carbohydrate biosynthesis; 3-deoxy-D-manno-octulosonate biosynthesis; 3-deoxy-D-manno-octulosonate from D-ribulose 5-phosphate: step 2/3. It functions in the pathway bacterial outer membrane biogenesis; lipopolysaccharide biosynthesis. The polypeptide is 2-dehydro-3-deoxyphosphooctonate aldolase (Legionella pneumophila (strain Lens)).